A 684-amino-acid polypeptide reads, in one-letter code: DNA-directed RNA polymerase subunit beta' (684 aa).

Zn(2+)-binding residues include C69, C71, C87, and C90. Mg(2+)-binding residues include D489, D491, and D493.

The protein belongs to the RNA polymerase beta' chain family. RpoC1 subfamily. In terms of assembly, in plastids the minimal PEP RNA polymerase catalytic core is composed of four subunits: alpha, beta, beta', and beta''. When a (nuclear-encoded) sigma factor is associated with the core the holoenzyme is formed, which can initiate transcription. It depends on Mg(2+) as a cofactor. The cofactor is Zn(2+).

It localises to the plastid. It is found in the chloroplast. It catalyses the reaction RNA(n) + a ribonucleoside 5'-triphosphate = RNA(n+1) + diphosphate. In terms of biological role, DNA-dependent RNA polymerase catalyzes the transcription of DNA into RNA using the four ribonucleoside triphosphates as substrates. The polypeptide is DNA-directed RNA polymerase subunit beta' (Marchantia polymorpha (Common liverwort)).